A 715-amino-acid chain; its full sequence is Dynein axonemal intermediate chain 7 (715 aa).

The tract at residues 291–322 (AVSKDLQEENKQENESNSVHEEETKAEGQGDV) is disordered. The segment covering 295–318 (DLQEENKQENESNSVHEEETKAEG) has biased composition (basic and acidic residues).

It belongs to the DNAI7 family. As to quaternary structure, part of the multisubunit axonemal dynein complex formed at least of two heavy chains and a number of intermediate and light chains. Associates with tubulin. Interacts with microtubule. Post-translationally, ubiquitinated. Ubiquitination leads to its degradation through the 26S proteasome. Ubiquitin-proteasome-mediated DNAI7 degradation occurs in mitosis.

Its subcellular location is the cell projection. The protein localises to the cilium. It is found in the cytoplasm. In terms of biological role, via its association with the multisubunit axonemal dynein complex, is potentially involved in the regulation of cilia function. May act as a cell cycle regulator. The polypeptide is Dynein axonemal intermediate chain 7 (Bos taurus (Bovine)).